A 208-amino-acid polypeptide reads, in one-letter code: Protein GrpE (208 aa).

The span at 1-25 shows a compositional bias: basic and acidic residues; sequence MVDNKDFNEELKENIQEELDNETKA. A disordered region spans residues 1–38; it reads MVDNKDFNEELKENIQEELDNETKAENPNIDEEVEEVS. The segment covering 29–38 has biased composition (acidic residues); the sequence is NIDEEVEEVS.

This sequence belongs to the GrpE family. As to quaternary structure, homodimer.

The protein localises to the cytoplasm. Functionally, participates actively in the response to hyperosmotic and heat shock by preventing the aggregation of stress-denatured proteins, in association with DnaK and GrpE. It is the nucleotide exchange factor for DnaK and may function as a thermosensor. Unfolded proteins bind initially to DnaJ; upon interaction with the DnaJ-bound protein, DnaK hydrolyzes its bound ATP, resulting in the formation of a stable complex. GrpE releases ADP from DnaK; ATP binding to DnaK triggers the release of the substrate protein, thus completing the reaction cycle. Several rounds of ATP-dependent interactions between DnaJ, DnaK and GrpE are required for fully efficient folding. The sequence is that of Protein GrpE from Clostridium perfringens (strain 13 / Type A).